The primary structure comprises 299 residues: Oxygen-dependent coproporphyrinogen-III oxidase (299 aa).

Residue Ser-92 coordinates substrate. Positions 96 and 106 each coordinate a divalent metal cation. His-106 (proton donor) is an active-site residue. Residue 108–110 (NVR) participates in substrate binding. A divalent metal cation-binding residues include His-145 and His-175. Positions 239–274 (YVEFNLVYDRGTLFGLQSGGRAESILMSLPPQVRWE) are important for dimerization. A substrate-binding site is contributed by 257–259 (GGR).

It belongs to the aerobic coproporphyrinogen-III oxidase family. In terms of assembly, homodimer. A divalent metal cation is required as a cofactor.

It is found in the cytoplasm. It catalyses the reaction coproporphyrinogen III + O2 + 2 H(+) = protoporphyrinogen IX + 2 CO2 + 2 H2O. It functions in the pathway porphyrin-containing compound metabolism; protoporphyrin-IX biosynthesis; protoporphyrinogen-IX from coproporphyrinogen-III (O2 route): step 1/1. Functionally, involved in the heme biosynthesis. Catalyzes the aerobic oxidative decarboxylation of propionate groups of rings A and B of coproporphyrinogen-III to yield the vinyl groups in protoporphyrinogen-IX. The sequence is that of Oxygen-dependent coproporphyrinogen-III oxidase from Xanthomonas campestris pv. campestris (strain B100).